The following is a 367-amino-acid chain: Riboflavin biosynthesis protein RibD (367 aa).

The CMP/dCMP-type deaminase domain occupies 1–123; it reads MQDEYYMARA…RLQQAGIDVS (123 aa). A deaminase region spans residues 1-145; that stretch reads MQDEYYMARA…KGFLKRMRTG (145 aa). Residue H50 participates in Zn(2+) binding. E52 functions as the Proton donor in the catalytic mechanism. Zn(2+) is bound by residues C75 and C84. The tract at residues 146-367 is reductase; the sequence is FPYIQLKLGA…PDVCLHLVGA (222 aa). 161 to 164 serves as a coordination point for NADP(+); the sequence is TAMA. S168 lines the substrate pocket. W170 provides a ligand contact to NADP(+). R184 is a binding site for substrate. Residues T196 and D200 each coordinate NADP(+). Residues L204 and R207 each contribute to the substrate site. S234 provides a ligand contact to NADP(+). E299 is a binding site for substrate. 301-304 is an NADP(+) binding site; that stretch reads GPTL.

It in the N-terminal section; belongs to the cytidine and deoxycytidylate deaminase family. In the C-terminal section; belongs to the HTP reductase family. As to quaternary structure, homodimer. Zn(2+) is required as a cofactor.

The catalysed reaction is 2,5-diamino-6-hydroxy-4-(5-phosphoribosylamino)-pyrimidine + H2O + H(+) = 5-amino-6-(5-phospho-D-ribosylamino)uracil + NH4(+). It catalyses the reaction 5-amino-6-(5-phospho-D-ribitylamino)uracil + NADP(+) = 5-amino-6-(5-phospho-D-ribosylamino)uracil + NADPH + H(+). Its pathway is cofactor biosynthesis; riboflavin biosynthesis; 5-amino-6-(D-ribitylamino)uracil from GTP: step 2/4. It participates in cofactor biosynthesis; riboflavin biosynthesis; 5-amino-6-(D-ribitylamino)uracil from GTP: step 3/4. In terms of biological role, converts 2,5-diamino-6-(ribosylamino)-4(3h)-pyrimidinone 5'-phosphate into 5-amino-6-(ribosylamino)-2,4(1h,3h)-pyrimidinedione 5'-phosphate. In Escherichia coli (strain K12), this protein is Riboflavin biosynthesis protein RibD (ribD).